The sequence spans 199 residues: UPF0316 protein LA_0606 (199 aa).

2 helical membrane passes run 47–67 (IAASLGFLEVLLWVVVITQVI) and 73–93 (VFCYLAYAGGFATGTFIGMIL).

It belongs to the UPF0316 family.

The protein resides in the cell membrane. This Leptospira interrogans serogroup Icterohaemorrhagiae serovar Lai (strain 56601) protein is UPF0316 protein LA_0606.